A 381-amino-acid chain; its full sequence is Chaperone protein DnaJ (381 aa).

Positions 5-70 constitute a J domain; that stretch reads DFYEVLGVSR…QKKAAYDQYG (66 aa). A CR-type zinc finger spans residues 136–214; sequence GVSKEIEVPT…CHGQGRKQKT (79 aa). Cys-149, Cys-152, Cys-166, Cys-169, Cys-188, Cys-191, Cys-202, and Cys-205 together coordinate Zn(2+). 4 CXXCXGXG motif repeats span residues 149–156, 166–173, 188–195, and 202–209; these read CDICDGSG, CGTCHGHG, CPTCNGKG, and CNSCHGQG.

Belongs to the DnaJ family. Homodimer. The cofactor is Zn(2+).

It is found in the cytoplasm. Its function is as follows. Participates actively in the response to hyperosmotic and heat shock by preventing the aggregation of stress-denatured proteins and by disaggregating proteins, also in an autonomous, DnaK-independent fashion. Unfolded proteins bind initially to DnaJ; upon interaction with the DnaJ-bound protein, DnaK hydrolyzes its bound ATP, resulting in the formation of a stable complex. GrpE releases ADP from DnaK; ATP binding to DnaK triggers the release of the substrate protein, thus completing the reaction cycle. Several rounds of ATP-dependent interactions between DnaJ, DnaK and GrpE are required for fully efficient folding. Also involved, together with DnaK and GrpE, in the DNA replication of plasmids through activation of initiation proteins. The sequence is that of Chaperone protein DnaJ from Vibrio atlanticus (strain LGP32) (Vibrio splendidus (strain Mel32)).